The primary structure comprises 419 residues: Serine hydroxymethyltransferase (419 aa).

Residues Leu-121 and 125–127 (GHL) each bind (6S)-5,6,7,8-tetrahydrofolate. Lys-230 is subject to N6-(pyridoxal phosphate)lysine.

It belongs to the SHMT family. Homodimer. The cofactor is pyridoxal 5'-phosphate.

It is found in the cytoplasm. The enzyme catalyses (6R)-5,10-methylene-5,6,7,8-tetrahydrofolate + glycine + H2O = (6S)-5,6,7,8-tetrahydrofolate + L-serine. It participates in one-carbon metabolism; tetrahydrofolate interconversion. Its pathway is amino-acid biosynthesis; glycine biosynthesis; glycine from L-serine: step 1/1. Functionally, catalyzes the reversible interconversion of serine and glycine with tetrahydrofolate (THF) serving as the one-carbon carrier. This reaction serves as the major source of one-carbon groups required for the biosynthesis of purines, thymidylate, methionine, and other important biomolecules. Also exhibits THF-independent aldolase activity toward beta-hydroxyamino acids, producing glycine and aldehydes, via a retro-aldol mechanism. The protein is Serine hydroxymethyltransferase of Vesicomyosocius okutanii subsp. Calyptogena okutanii (strain HA).